Reading from the N-terminus, the 384-residue chain is 8-amino-7-oxononanoate synthase (384 aa).

Residue arginine 21 coordinates substrate. Glycine 108–phenylalanine 109 lines the pyridoxal 5'-phosphate pocket. Histidine 133 contributes to the substrate binding site. The pyridoxal 5'-phosphate site is built by serine 179, histidine 207, and threonine 233. Lysine 236 bears the N6-(pyridoxal phosphate)lysine mark. Threonine 352 is a substrate binding site.

This sequence belongs to the class-II pyridoxal-phosphate-dependent aminotransferase family. BioF subfamily. As to quaternary structure, homodimer. Requires pyridoxal 5'-phosphate as cofactor.

It carries out the reaction 6-carboxyhexanoyl-[ACP] + L-alanine + H(+) = (8S)-8-amino-7-oxononanoate + holo-[ACP] + CO2. The protein operates within cofactor biosynthesis; biotin biosynthesis. Functionally, catalyzes the decarboxylative condensation of pimeloyl-[acyl-carrier protein] and L-alanine to produce 8-amino-7-oxononanoate (AON), [acyl-carrier protein], and carbon dioxide. This Escherichia coli O157:H7 protein is 8-amino-7-oxononanoate synthase.